We begin with the raw amino-acid sequence, 301 residues long: Protein ARMCX6 (301 aa).

The tract at residues 1-6 (MGRARE) is mitochondrion outer membrane (MOM)-targeting sequence. The Mitochondrial intermembrane portion of the chain corresponds to 1 to 7 (MGRAREM). A helical; Signal-anchor membrane pass occupies residues 8-25 (GWMAAGLMIGAGACYCMY). The interval 26-36 (KLTMGRSEGNE) is mitochondrion outer membrane (MOM)-targeting sequence. The Cytoplasmic segment spans residues 26–301 (KLTMGRSEGN…REMLVEAISP (276 aa)). Residues 69-101 (WSEDGDWDEPGAPGGTEDRRSGGGKANRAHPIK) form a disordered region.

Belongs to the eutherian X-chromosome-specific Armcx family. In terms of tissue distribution, highly expressed in the developing neural tissues, neural crest derivatives and hind limbs. Also widely expressed in the adult nervous tissue, especially in the forebrain, including the cerebral cortex, hippocampus and thalamus.

The protein resides in the mitochondrion. Its subcellular location is the mitochondrion outer membrane. Functionally, may regulate the dynamics and distribution of mitochondria in neural cells. This is Protein ARMCX6 (Armcx6) from Mus musculus (Mouse).